Consider the following 227-residue polypeptide: LysM and putative peptidoglycan-binding domain-containing protein 1 (227 aa).

Residues 1–11 show a composition bias toward pro residues; that stretch reads MASPSRQPPPG. The disordered stretch occupies residues 1 to 22; that stretch reads MASPSRQPPPGGSGLLQGSRAR. 2 positions are modified to phosphoserine: S23 and S33. The LysM domain maps to 40-84; the sequence is LEHQLEPGDTLAGLALKYGVTMEQIKRANRLYTNDSIFLKKTLYI. A disordered region spans residues 97–150; that stretch reads LDSEEEKDGEEKVHPSNSEVWPHSTERKKQETGAGRANGEVLPTPGQETPTPIH. Phosphoserine is present on residues S99, S166, S194, and S212.

The chain is LysM and putative peptidoglycan-binding domain-containing protein 1 (LYSMD1) from Homo sapiens (Human).